The sequence spans 473 residues: Uronate isomerase (473 aa).

This sequence belongs to the metallo-dependent hydrolases superfamily. Uronate isomerase family.

It catalyses the reaction D-glucuronate = D-fructuronate. The catalysed reaction is aldehydo-D-galacturonate = keto-D-tagaturonate. It participates in carbohydrate metabolism; pentose and glucuronate interconversion. The sequence is that of Uronate isomerase from Bacillus licheniformis (strain ATCC 14580 / DSM 13 / JCM 2505 / CCUG 7422 / NBRC 12200 / NCIMB 9375 / NCTC 10341 / NRRL NRS-1264 / Gibson 46).